Reading from the N-terminus, the 120-residue chain is Large ribosomal subunit protein uL22 (120 aa).

The disordered stretch occupies residues 1–25 (MFVNKKYTAKGKNLPSSPKKVRPIA).

Belongs to the universal ribosomal protein uL22 family. As to quaternary structure, part of the 50S ribosomal subunit.

Its function is as follows. This protein binds specifically to 23S rRNA; its binding is stimulated by other ribosomal proteins, e.g. L4, L17, and L20. It is important during the early stages of 50S assembly. It makes multiple contacts with different domains of the 23S rRNA in the assembled 50S subunit and ribosome. The globular domain of the protein is located near the polypeptide exit tunnel on the outside of the subunit, while an extended beta-hairpin is found that lines the wall of the exit tunnel in the center of the 70S ribosome. The sequence is that of Large ribosomal subunit protein uL22 from Borrelia duttonii (strain Ly).